A 55-amino-acid polypeptide reads, in one-letter code: Large ribosomal subunit protein bL33 (55 aa).

It belongs to the bacterial ribosomal protein bL33 family.

This Dinoroseobacter shibae (strain DSM 16493 / NCIMB 14021 / DFL 12) protein is Large ribosomal subunit protein bL33.